A 685-amino-acid chain; its full sequence is Protein argonaute (685 aa).

Residues 1–99 are N-terminal domain; that stretch reads MNHLGKTEVF…LYPKGRRPLD (99 aa). The interval 100-176 is linker L1; it reads PKDPGERSVL…VDPAYRILCE (77 aa). A PAZ domain is found at 169-265; sequence PAYRILCEMS…HLTGLLVPVL (97 aa). The linker L2 stretch occupies residues 272 to 337; sequence EEEGSLALSL…SKPADALRVG (66 aa). A mid domain region spans residues 338-463; the sequence is FYRAQETALA…LLAKAGLQVV (126 aa). The segment at 464-685 is PIWI domain; it reads ALSGAYPAEL…EVDREKLFFV (222 aa). Residues Asp-478, Glu-512, Asp-546, and Asp-660 contribute to the active site. Residue Asp-478 participates in Mn(2+) binding. In terms of domain architecture, Piwi spans 507–671; the sequence is EAQAGERIPQ…LVKEVGRLGI (165 aa). Residues Asp-546, Asp-660, and Val-685 each coordinate Mn(2+).

The protein belongs to the argonaute family. Long pAgo subfamily. Coimmunoprecipitates with a number of proteins involved in DNA replication or recombination including RepA (initiates replication), AddA/B (TT_C0638 and TT_C0639), ArgR, GyrA/B, HU (TT_C0984), PriA, Rad52 (TT_C1923), RecJ, SSB, TopA and UvrB. Most proteins remain associated with TtAgo after DNase treatment and associate with catalytically inactive protein. It depends on Mn(2+) as a cofactor.

In terms of biological role, a DNA-guided ssDNA endonuclease. Uses short ssDNA sequences as guides (gDNA, also called small interfering DNA, siDNA) to bind complementary DNA target strands, resulting in cleavage of the target DNA (tDNA). The cleavage site is 10 nucleotides (nt) downstream of the target residue base-paired with the 5'-end of the gDNA. Plays a role in completion of DNA replication, participates in decatenating replicated DNA and plasmid. In situ purifies with 5'-phosphorylated long DNA (about 1160 nt, maps to the whole chromosome and plasmid), 25-35 nt RNAs that map to the whole chromosome and 15-18 nt DNA that maps to the replication terminus region (ter) on the chromosome and plasmid. Most short DNA starts with dC. Has been shown to have guide sequence-independent dsDNase activity called 'chopping', which requires unstable DNA (high AT-content, multiple mismatches or low salt conditions), and could be used to generate gDNA. Preferentially binds tDNA with dC at its 3'-terminus. Has also been shown to have no detectable guide sequence-independent dsDNase activity. The latter study proposes TtAgo may acquire gDNA from nicked dsDNA, by binding to 5'-phosphorylated-dC nicks, then cleaving 10 nt away on the opposite strand; subsequently an exonuclease (maybe AddA-AddB helicase/nuclease) trims the ends to generate the gDNA. Functionally, involved in defense against invading mobile genetic elements. TtAgo interferes with plasmid DNA, stimulates expression of specific endogenous genes, including various CRISPR loci and at least part of the CRISPR adaptation machinery, but only when exogenous plasmid DNA is present. Upon purification from E.coli associates with gDNA 13-25 nt long with 5'-phosphorylated ends and with 10-150 nt RNA with 5'-OH. DNA corresponds to the expression plasmid rather than chromosomal DNA; 89% of gDNA starts with dC and 72% has dA in the second position. Endonucleolytically cleaves tDNA with 5'-phosphorylated gDNA but not 5'-phosphorylated gRNA; the active site is involved in processing or binding of ssDNA. Nicks or linearizes supercoiled plasmid target when it has the appropriate gDNA sequences, does not cleave linear tDNA. Positions 4 to 16 of the tDNA need to be base paired to the gDNA for efficient tDNA cleavage. Although the system can support single nucleotide insertions in either the gDNA or tDNA, in all cases cleavage activity is reduced, with a wide range of sequence- and position-specific effects. First characterized as a DNA-guided RNA endonuclease. Uses gDNA to bind complementary RNA target strands, resulting in cleavage of the target RNA. The cleavage site is 10 nucleotides (nt) downstream of the target residue base-paired with the 5'-end of the guide DNA. This is Protein argonaute from Thermus thermophilus (strain ATCC BAA-163 / DSM 7039 / HB27).